The primary structure comprises 387 residues: Probable serine/threonine-protein kinase PBL18 (387 aa).

The segment at 1–37 (MGNCLDSSARVGNRESTFGGSSRISRKPNQSSRLSSL) is disordered. A lipid anchor (N-myristoyl glycine) is attached at Gly-2. Cys-4 carries the S-palmitoyl cysteine lipid modification. Polar residues predominate over residues 14–37 (RESTFGGSSRISRKPNQSSRLSSL). Thr-73 is subject to Phosphothreonine. The Protein kinase domain maps to 84-365 (FKPNSMIGEG…ADVLSTLQQL (282 aa)). ATP contacts are provided by residues 90–98 (IGEGGFGCV) and Lys-122. Residue Tyr-167 is modified to Phosphotyrosine. Residue Asp-215 is the Proton acceptor of the active site. Ser-219 is modified (phosphoserine). Residues Thr-250 and Thr-255 each carry the phosphothreonine modification. Residue Tyr-263 is modified to Phosphotyrosine. A disordered region spans residues 368–387 (SSKKMGSTQNIVMSPSSHMS).

Belongs to the protein kinase superfamily. Ser/Thr protein kinase family.

The protein resides in the cell membrane. The enzyme catalyses L-seryl-[protein] + ATP = O-phospho-L-seryl-[protein] + ADP + H(+). The catalysed reaction is L-threonyl-[protein] + ATP = O-phospho-L-threonyl-[protein] + ADP + H(+). May be involved in plant defense signaling. This is Probable serine/threonine-protein kinase PBL18 from Arabidopsis thaliana (Mouse-ear cress).